The primary structure comprises 110 residues: uncharacterized protein (110 aa).

It is found in the mitochondrion. This is an uncharacterized protein from Arabidopsis thaliana (Mouse-ear cress).